A 63-amino-acid chain; its full sequence is Metallothionein-1 (63 aa).

2 repeats span residues 23 to 30 (CGDKCECK) and 56 to 63 (CGDKCECK).

The protein belongs to the metallothionein superfamily. Type 9 family.

In terms of biological role, the metallothioneins are involved in the cellular sequestration of toxic metal ions. The protein is Metallothionein-1 (MT-I) of Candida glabrata (strain ATCC 2001 / BCRC 20586 / JCM 3761 / NBRC 0622 / NRRL Y-65 / CBS 138) (Yeast).